Reading from the N-terminus, the 246-residue chain is Protein SRL3 (246 aa).

The segment covering 49–61 (SISEAQDSPTSAP) has biased composition (polar residues). Disordered regions lie at residues 49–68 (SISE…GNED) and 200–229 (HAKS…QENS). Residue Ser212 is modified to Phosphoserine.

Interacts with CLN2. In terms of processing, phosphorylated by CDC28, probably in association with G1 cyclin CLN2.

It is found in the cytoplasm. Functionally, weakly suppresses a RAD53 null mutation when overexpressed. The polypeptide is Protein SRL3 (SRL3) (Saccharomyces cerevisiae (strain ATCC 204508 / S288c) (Baker's yeast)).